We begin with the raw amino-acid sequence, 966 residues long: MANKMEKMASIDAQLRQLVPAKVSEDDKLIEYDALLLDRFLDILQDLHGEDLKDSVQEVYELSAEYERKHDPKKLEELGNLITSFDAGDSIVVAKSFSHMLNLANLAEEVQIAHRRRNKLKKGDFRDESNATTESDIEETLKKLVFDMKKSPQEVFDALKNQTVDLVLTAHPTQSVRRSLLQKHGRVRNCLSQLYAKDITPDDKQELDEALQREIQAAFRTDEIKRTPPTPQDEMRAGMSYFHETIWKGVPKFLRRVDTALKNIGINERVPYNAPLIQFSSWMGGDRDGNPRVTPEVTRDVCLLARMMAANLYYSQIEDLMFELSMWRCNDELRVRAEELHRNSKKDEVAKHYIEFWKKIPLNEPYRVVLGEVRDKLYRTRERSRYLLAHGYCEIPEEATFTNVDEFLEPLELCYRSLCACGDRAIADGSLLDFLRQVSTFGLSLVRLDIRQESDRHTDVMDAITKHLEIGSYQEWSEEKRQEWLLSELIGKRPLFGPDLPQTDEIRDVLDTFRVIAELPSDNFGAYIISMATAPSDVLAVELLQRECKVRNPLRVVPLFEKLDDLESAPAALARLFSIDWYINRIDGKQEVMIGYSDSGKDAGRFSAAWQLYKAQEDLIKVAQKFGVKLTMFHGRGGTVGRGGGPTHLAILSQPPETIHGSLRVTVQGEVIEQSFGEEHLCFRTLQRFTAATLEHGMRPPSSPKPEWRALMDQMAVIATEEYRSIVFKEPRFVEYFRLATPEMEYGRMNIGSRPAKRRPSGGIETLRAIPWIFAWTQTRFHLPVWLGFGAAFRQVVQKDVKNLHMLQEMYNQWPFFRVTIDLVEMVFAKGDPGIAALNDRLLVSKDLWPFGEQLRSKYEETKKLLLQVAAHKEVLEGDPYLKQRLRLRDSYITTLNVFQAYTLKRIRDPNYKVEVRPPISKESAETSKPADELVTLNPTSEYAPGLEDTLILTMKGIAAGMQNTG.

Phosphoserine is present on Ser-10. Active-site residues include His-171 and Lys-601.

This sequence belongs to the PEPCase type 1 family. In terms of assembly, homotetramer. It depends on Mg(2+) as a cofactor.

The protein resides in the cytoplasm. It carries out the reaction oxaloacetate + phosphate = phosphoenolpyruvate + hydrogencarbonate. By light-reversible phosphorylation. In terms of biological role, through the carboxylation of phosphoenolpyruvate (PEP) it forms oxaloacetate, a four-carbon dicarboxylic acid source for the tricarboxylic acid cycle. The polypeptide is Phosphoenolpyruvate carboxylase (PEPC) (Medicago sativa (Alfalfa)).